Here is a 357-residue protein sequence, read N- to C-terminus: Elongation factor Ts (357 aa).

Residues Thr-82–Val-85 are involved in Mg(2+) ion dislocation from EF-Tu.

Belongs to the EF-Ts family.

Its subcellular location is the cytoplasm. Associates with the EF-Tu.GDP complex and induces the exchange of GDP to GTP. It remains bound to the aminoacyl-tRNA.EF-Tu.GTP complex up to the GTP hydrolysis stage on the ribosome. The chain is Elongation factor Ts from Campylobacter jejuni subsp. doylei (strain ATCC BAA-1458 / RM4099 / 269.97).